Consider the following 220-residue polypeptide: Adapter protein MecA (220 aa).

Belongs to the MecA family. In terms of assembly, homodimer.

Enables the recognition and targeting of unfolded and aggregated proteins to the ClpC protease or to other proteins involved in proteolysis. This is Adapter protein MecA from Enterococcus faecalis (strain ATCC 700802 / V583).